Consider the following 372-residue polypeptide: Biotin synthase (372 aa).

Residues 73 to 308 (CCGNTVDLCS…QQIIRYAGGR (236 aa)) form the Radical SAM core domain. Positions 91, 95, and 98 each coordinate [4Fe-4S] cluster. 4 residues coordinate [2Fe-2S] cluster: C136, C173, C233, and R303.

This sequence belongs to the radical SAM superfamily. Biotin synthase family. As to quaternary structure, homodimer. Requires [4Fe-4S] cluster as cofactor. [2Fe-2S] cluster serves as cofactor.

It catalyses the reaction (4R,5S)-dethiobiotin + (sulfur carrier)-SH + 2 reduced [2Fe-2S]-[ferredoxin] + 2 S-adenosyl-L-methionine = (sulfur carrier)-H + biotin + 2 5'-deoxyadenosine + 2 L-methionine + 2 oxidized [2Fe-2S]-[ferredoxin]. Its pathway is cofactor biosynthesis; biotin biosynthesis; biotin from 7,8-diaminononanoate: step 2/2. Catalyzes the conversion of dethiobiotin (DTB) to biotin by the insertion of a sulfur atom into dethiobiotin via a radical-based mechanism. This is Biotin synthase from Cyanothece sp. (strain PCC 7425 / ATCC 29141).